A 132-amino-acid polypeptide reads, in one-letter code: Dehydratase CTB10 (132 aa).

The 97-residue stretch at proline 21–methionine 117 folds into the EthD domain.

Belongs to the tpcK family.

It participates in mycotoxin biosynthesis. Dehydratase; part of the gene cluster that mediates the biosynthesis of cercosporin, a light-activated, non-host-selective toxin. The perylenequinone chromophore of cercosporin absorbs light energy to attain an electronically-activated triplet state and produces active oxygen species such as the hydroxyl radical, superoxide, hydrogen peroxide or singlet oxygen upon reaction with oxygen molecules. These reactive oxygen species cause damage to various cellular components including lipids, proteins and nucleic acids. The first step of cercosporin biosynthesis is performed by the polyketide synthase CTB1 which catalyzes the formation of nor-toralactone. The starter unit acyltransferase (SAT) domain of CTB1 initiates polyketide extension by the selective utilization of acetyl-CoA, which is elongated to the heptaketide in the beta-ketoacyl synthase (KS) domain by successive condensations with six malonyl units introduced by the malonyl acyltransferase (MAT) domain. The product template (PT) domain catalyzes C4-C9 and C2-C11 aldol cyclizations and dehydrations to a trihydroxynaphthalene, which is thought to be delivered to the thioesterase (TE) domain for product release. The bifunctional enzyme CTB3 then methylates nor-toralactone to toralactone before conducting an unusual oxidative aromatic ring opening. The O-methyltransferase CTB2 further methylates the nascent OH-6 of the CBT3 product, blocking further oxidation at this site before the reductase CTB6 reduces the 2-oxopropyl ketone at position C7, giving naphthalene. The FAD-dependent monooxygenase CTB5 in concert with the multicopper oxidase CTB12 are responsible for homodimerization of naphthalene with CTB7 installing the dioxepine moiety, finally producing cercosporin. The fasciclin domain-containing protein CTB11 might act with CTB5 and CTB12 whereas the roles of CTB9 and CTB10 have still to be elucidated. The chain is Dehydratase CTB10 from Cercospora beticola (Sugarbeet leaf spot fungus).